The sequence spans 168 residues: Large ribosomal subunit protein uL10 (168 aa).

Belongs to the universal ribosomal protein uL10 family. In terms of assembly, part of the ribosomal stalk of the 50S ribosomal subunit. The N-terminus interacts with L11 and the large rRNA to form the base of the stalk. The C-terminus forms an elongated spine to which L12 dimers bind in a sequential fashion forming a multimeric L10(L12)X complex.

In terms of biological role, forms part of the ribosomal stalk, playing a central role in the interaction of the ribosome with GTP-bound translation factors. In Acinetobacter baylyi (strain ATCC 33305 / BD413 / ADP1), this protein is Large ribosomal subunit protein uL10.